Here is a 335-residue protein sequence, read N- to C-terminus: Glycerol-3-phosphate dehydrogenase [NAD(P)+] (335 aa).

5 residues coordinate NADPH: S12, W13, H33, R34, and K108. Residues K108, G137, and T139 each coordinate sn-glycerol 3-phosphate. A141 contacts NADPH. Sn-glycerol 3-phosphate contacts are provided by K192, D245, S255, R256, and N257. Catalysis depends on K192, which acts as the Proton acceptor. Residue R256 coordinates NADPH. E282 lines the NADPH pocket.

It belongs to the NAD-dependent glycerol-3-phosphate dehydrogenase family.

The protein localises to the cytoplasm. It carries out the reaction sn-glycerol 3-phosphate + NAD(+) = dihydroxyacetone phosphate + NADH + H(+). The catalysed reaction is sn-glycerol 3-phosphate + NADP(+) = dihydroxyacetone phosphate + NADPH + H(+). Its pathway is membrane lipid metabolism; glycerophospholipid metabolism. Catalyzes the reduction of the glycolytic intermediate dihydroxyacetone phosphate (DHAP) to sn-glycerol 3-phosphate (G3P), the key precursor for phospholipid synthesis. In Methylococcus capsulatus (strain ATCC 33009 / NCIMB 11132 / Bath), this protein is Glycerol-3-phosphate dehydrogenase [NAD(P)+].